We begin with the raw amino-acid sequence, 156 residues long: Iron sulfur cluster assembly protein 2, mitochondrial (156 aa).

Residues 1–26 constitute a mitochondrion transit peptide; that stretch reads MFARLANPAHFKPLTGSHITRAAKRL.

The protein belongs to the NifU family. In terms of assembly, component of the core Fe-S cluster (ISC) assembly machinery. Interacts with frataxin. Interacts with the mitochondrial co-chaperones JAC1 and SSQ1. Interacts with NFS1. Interacts with ferredoxin YAH1; interacts with the reduced form. [2Fe-2S] cluster serves as cofactor.

It is found in the mitochondrion matrix. Its pathway is cofactor biosynthesis; iron-sulfur cluster biosynthesis. Functionally, scaffold protein for the de novo synthesis of iron-sulfur (Fe-S) clusters within mitochondria, which is required for maturation of both mitochondrial and cytoplasmic [2Fe-2S] and [4Fe-4S] proteins. First, a [2Fe-2S] cluster is transiently assembled on the scaffold proteins ISU1 and ISU2. In a second step, the cluster is released from ISU1/ISU2, transferred to glutaredoxin GRX5, followed by the formation of mitochondrial [2Fe-2S] proteins, the synthesis of [4Fe-4S] clusters and their target-specific insertion into the recipient apoproteins. Cluster assembly on ISU1/ISU2 depends on the function of the cysteine desulfurase complex NFS1-ISD11, which serves as the sulfur donor for cluster synthesis, the iron-binding protein frataxin (YFH1) as the putative iron donor, and the electron transfer chain comprised of ferredoxin reductase ARH1 and ferredoxin YAH1, which receive their electrons from NADH. Fe-S cluster release from ISU1/ISU2 is achieved by interaction with the Hsp70 chaperone SSQ1, assisted by the DnaJ-like co-chaperone JAC1 and the nucleotide exchange factor MGE1. ISU1 is the major isoform in yeast, while ISU2 is not detectable in cells grown to stationary phase. Also involved in production of a sulfur precursor required for thiolation of cytoplasmic tRNAs. The protein is Iron sulfur cluster assembly protein 2, mitochondrial of Saccharomyces cerevisiae (strain ATCC 204508 / S288c) (Baker's yeast).